A 293-amino-acid chain; its full sequence is N-acetylneuraminate lyase (293 aa).

Aceneuramate contacts are provided by serine 48 and serine 49. Tyrosine 137 acts as the Proton donor in catalysis. The active-site Schiff-base intermediate with substrate is lysine 165. Residues threonine 167, glycine 189, aspartate 191, glutamate 192, and serine 208 each coordinate aceneuramate.

It belongs to the DapA family. NanA subfamily. Homotetramer.

The protein resides in the cytoplasm. The catalysed reaction is aceneuramate = aldehydo-N-acetyl-D-mannosamine + pyruvate. It functions in the pathway amino-sugar metabolism; N-acetylneuraminate degradation; D-fructose 6-phosphate from N-acetylneuraminate: step 1/5. Catalyzes the reversible aldol cleavage of N-acetylneuraminic acid (sialic acid; Neu5Ac) to form pyruvate and N-acetylmannosamine (ManNAc) via a Schiff base intermediate. This Staphylococcus aureus (strain Mu3 / ATCC 700698) protein is N-acetylneuraminate lyase.